Consider the following 82-residue polypeptide: U16-lycotoxin-Ls1a (82 aa).

Positions 1 to 22 are cleaved as a signal peptide; that stretch reads MSPKVQALLLLVGLITFLAVHA. The propeptide occupies 23 to 34; it reads EEELSETVESER. Intrachain disulfides connect Cys-36-Cys-51, Cys-43-Cys-56, Cys-50-Cys-67, and Cys-58-Cys-65.

It belongs to the neurotoxin 02 (plectoxin) family. 04 (U16-lycotoxin) subfamily. Expressed by the venom gland.

The protein resides in the secreted. This is U16-lycotoxin-Ls1a from Lycosa singoriensis (Wolf spider).